The sequence spans 360 residues: Alpha-methylacyl-CoA racemase (360 aa).

Residues Arg38, 59-62, 83-85, Arg91, and 125-130 contribute to the substrate site; these read ADLK, GYR, and GHDINY. Residue His126 is the Proton acceptor of the active site. The active-site Proton donor is Asp156.

The protein belongs to the CoA-transferase III family. In terms of assembly, homodimer.

The enzyme catalyses a (2S)-2-methylacyl-CoA = a (2R)-2-methylacyl-CoA. The catalysed reaction is (2S)-2-methyltetradecanoyl-CoA = (2R)-2-methyltetradecanoyl-CoA. It catalyses the reaction (2R)-pristanoyl-CoA = (2S)-pristanoyl-CoA. It carries out the reaction (25S)-3-oxocholest-4-en-26-oyl-CoA = (25R)-3-oxocholest-4-en-26-oyl-CoA. The enzyme catalyses (2S)-ibuprofenoyl-CoA = (2R)-ibuprofenoyl-CoA. With respect to regulation, inactivated by N,N-dialkylcarbamoyl-CoA substrate-product analogs. In terms of biological role, catalyzes the epimerization of (2R)- and (2S)-methylacyl-coenzyme A (CoA) thioesters. Accepts as substrates a wide range of alpha-methylacyl-CoAs, including (2R)-2-methylmyristoyl-CoA and (2S)-2-methylmyristoyl-CoA, (2R)-pristanoyl-CoA and (2S)-pristanoyl-CoA, and the cholesterol esters (25R)-3-oxo-cholest-4-en-26-oyl-CoA and (25S)-3-oxo-cholest-4-en-26-oyl-CoA. Can also catalyze the interconversion of the non-physiologic substrates (2R)-ibuprofenoyl-CoA and (2S)-ibuprofenoyl-CoA, which are potential competitive inhibitors of the enzyme. The chain is Alpha-methylacyl-CoA racemase from Mycobacterium tuberculosis (strain ATCC 25618 / H37Rv).